Here is a 261-residue protein sequence, read N- to C-terminus: tRNA (guanine-N(7)-)-methyltransferase (261 aa).

Residues glutamate 75, glutamate 100, aspartate 127, and aspartate 150 each contribute to the S-adenosyl-L-methionine site. The active site involves aspartate 150. Lysine 154 lines the substrate pocket. Positions 156 to 161 (RHNKRR) are interaction with RNA. Substrate is bound by residues aspartate 186 and 223-226 (THFE).

It belongs to the class I-like SAM-binding methyltransferase superfamily. TrmB family.

The catalysed reaction is guanosine(46) in tRNA + S-adenosyl-L-methionine = N(7)-methylguanosine(46) in tRNA + S-adenosyl-L-homocysteine. It participates in tRNA modification; N(7)-methylguanine-tRNA biosynthesis. Functionally, catalyzes the formation of N(7)-methylguanine at position 46 (m7G46) in tRNA. In Xanthomonas axonopodis pv. citri (strain 306), this protein is tRNA (guanine-N(7)-)-methyltransferase.